Consider the following 238-residue polypeptide: 2-phytyl-1,4-naphtoquinone methyltransferase (238 aa).

This sequence belongs to the class I-like SAM-binding methyltransferase superfamily. MenG/UbiE family.

It catalyses the reaction demethylphylloquinol + S-adenosyl-L-methionine = phylloquinol + S-adenosyl-L-homocysteine + H(+). It functions in the pathway cofactor biosynthesis; phylloquinone biosynthesis. In terms of biological role, methyltransferase required for the conversion of 2-phytyl-1,4-beta-naphthoquinol to phylloquinol. The polypeptide is 2-phytyl-1,4-naphtoquinone methyltransferase (Synechocystis sp. (strain ATCC 27184 / PCC 6803 / Kazusa)).